The following is a 486-amino-acid chain: ATP-dependent rRNA helicase RRP3 (486 aa).

A compositionally biased stretch (basic residues) spans 1 to 11 (MSKVTKQSKSH). The segment at 1–52 (MSKVTKQSKSHKSSELVSLAEKIKQKALENRKQSREESQATEEANTASETEA) is disordered. Residues 17–49 (VSLAEKIKQKALENRKQSREESQATEEANTASE) are a coiled coil. The segment covering 21 to 38 (EKIKQKALENRKQSREES) has biased composition (basic and acidic residues). A compositionally biased stretch (low complexity) spans 41 to 52 (TEEANTASETEA). The Q motif signature appears at 66–94 (SSFRELDLVPELIEACDNLNFTKPTPIQS). The Helicase ATP-binding domain occupies 97–269 (IPPALQGKDI…RASLTNPVKC (173 aa)). 110 to 117 (AQTGSGKT) contributes to the ATP binding site. The short motif at 216-219 (DEAD) is the DEAD box element. Residues 300–446 (LLNEFIGKTT…SIVLSLRDSV (147 aa)) form the Helicase C-terminal domain. The tract at residues 459–486 (RRNKEKQTRGKGRRSRTATRENMDKEEE) is disordered. The span at 476–486 (ATRENMDKEEE) shows a compositional bias: basic and acidic residues.

Belongs to the DEAD box helicase family. DDX47/RRP3 subfamily. Interacts with the SSU processome.

It is found in the nucleus. The catalysed reaction is ATP + H2O = ADP + phosphate + H(+). Its function is as follows. ATP-dependent rRNA helicase required for pre-ribosomal RNA processing. Involved in the maturation of the 35S-pre-rRNA and to its cleavage to mature 18S rRNA. In Eremothecium gossypii (strain ATCC 10895 / CBS 109.51 / FGSC 9923 / NRRL Y-1056) (Yeast), this protein is ATP-dependent rRNA helicase RRP3.